We begin with the raw amino-acid sequence, 344 residues long: Adenosine deaminase (344 aa).

Residues His14 and His16 each contribute to the Zn(2+) site. Residues His16, Asp18, and Gly177 each contribute to the substrate site. His204 provides a ligand contact to Zn(2+). Glu207 serves as the catalytic Proton donor. Asp284 is a Zn(2+) binding site.

This sequence belongs to the metallo-dependent hydrolases superfamily. Adenosine and AMP deaminases family. Adenosine deaminase subfamily. Zn(2+) serves as cofactor.

The catalysed reaction is adenosine + H2O + H(+) = inosine + NH4(+). The enzyme catalyses 2'-deoxyadenosine + H2O + H(+) = 2'-deoxyinosine + NH4(+). Functionally, catalyzes the hydrolytic deamination of adenosine and 2-deoxyadenosine. This chain is Adenosine deaminase, found in Haemophilus ducreyi (strain 35000HP / ATCC 700724).